The sequence spans 311 residues: Olfactory receptor 5AN1 (311 aa).

The Extracellular segment spans residues 1 to 26; it reads MTGGGNITEITYFILLGFSDFPRIIK. N6 carries N-linked (GlcNAc...) asparagine glycosylation. The chain crosses the membrane as a helical span at residues 27–47; it reads VLFTIFLVIYITSLAWNLSLI. The Cytoplasmic portion of the chain corresponds to 48–55; it reads VLIRMDSH. The helical transmembrane segment at 56-76 threads the bilayer; that stretch reads LHTPMYFFLSNLSFIDVCYIS. Residues 77–100 lie on the Extracellular side of the membrane; it reads STVPKMLSNLLQEQQTITFVGCII. C98 and C190 form a disulfide bridge. The chain crosses the membrane as a helical span at residues 101–121; that stretch reads QYFIFSTMGLSESCLMTAMAY. Over 122-134 the chain is Cytoplasmic; that stretch reads DRYAAICNPLLYS. Residues 135-155 traverse the membrane as a helical segment; sequence SIMSPTLCVWMVLGAYMTGLT. The Extracellular portion of the chain corresponds to 156-197; that stretch reads ASLFQIGALLQLHFCGSNVIRHFFCDMPQLLILSCTDTFFVQ. The helical transmembrane segment at 198 to 218 threads the bilayer; that stretch reads VMTAILTMFFGIASALVIMIS. At 219–238 the chain is on the cytoplasmic side; the sequence is YGYIGISIMKITSAKGRSKA. The helical transmembrane segment at 239 to 259 threads the bilayer; sequence FNTCASHLTAVSLFYTSGIFV. Residues 260–272 are Extracellular-facing; sequence YLSSSSGGSSSFD. A helical transmembrane segment spans residues 273–293; sequence RFASVFYTVVIPMLNPLIYSL. Residues 294-311 lie on the Cytoplasmic side of the membrane; it reads RNKEIKDALKRLQKRKCC.

The protein belongs to the G-protein coupled receptor 1 family.

The protein localises to the cell membrane. In terms of biological role, odorant receptor for musk, which specifically recognizes muscone, musk xylol, and musk ketone. Ligand-binding causes a conformation change that triggers signaling via G(s)-class of G alpha protein GNAL, activating adenylyl cyclase. This is Olfactory receptor 5AN1 from Homo sapiens (Human).